The following is a 307-amino-acid chain: MDVVNQLVAGGQFRVVKEPLGFVKVLQWVFAIFAFATCGSYTGELRLSVECANKTESALNIEVEFEYPFRLHQVYFDAPSCVKGGTTKIFLVGDYSSSAEFFVTVAVFAFLYSMGALATYIFLQNKYRENNKGPMMDFLATAVFAFMWLVSSSAWAKGLSDVKMATDPENIIKEMPMCRQTGNTCKELRDPVTSGLNTSVVFGFLNLVLWVGNLWFVFKETGWAAPFMRAPPGAPEKQPAPGDAYGDAGYGQGPGGYGPQDSYGPQGGYQPDYGQPASGGGGYGPQGDYGQQGYGQQGAPTSFSNQM.

Residues 1–19 (MDVVNQLVAGGQFRVVKEP) lie on the Cytoplasmic side of the membrane. The region spanning 15-222 (VVKEPLGFVK…NLWFVFKETG (208 aa)) is the MARVEL domain. A helical membrane pass occupies residues 20–43 (LGFVKVLQWVFAIFAFATCGSYTG). Residues 44-101 (ELRLSVECANKTESALNIEVEFEYPFRLHQVYFDAPSCVKGGTTKIFLVGDYSSSAEF) lie on the Vesicular side of the membrane. An N-linked (GlcNAc...) asparagine glycan is attached at Asn53. Tyr75 is modified (phosphotyrosine). Residues 102-125 (FVTVAVFAFLYSMGALATYIFLQN) form a helical membrane-spanning segment. Topologically, residues 126–132 (KYRENNK) are cytoplasmic. The chain crosses the membrane as a helical span at residues 133-156 (GPMMDFLATAVFAFMWLVSSSAWA). Over 157-194 (KGLSDVKMATDPENIIKEMPMCRQTGNTCKELRDPVTS) the chain is Vesicular. Residues 195–218 (GLNTSVVFGFLNLVLWVGNLWFVF) traverse the membrane as a helical segment. Over 219 to 307 (KETGWAAPFM…GAPTSFSNQM (89 aa)) the chain is Cytoplasmic. Thr221 bears the Phosphothreonine mark. The disordered stretch occupies residues 233-307 (GAPEKQPAPG…GAPTSFSNQM (75 aa)). The span at 248-258 (AGYGQGPGGYG) shows a compositional bias: gly residues. The tract at residues 249 to 298 (GYGQGPGGYGPQDSYGPQGGYQPDYGQPASGGGGYGPQGDYGQQGYGQQG) is repeats, Gly-rich. Low complexity predominate over residues 259–276 (PQDSYGPQGGYQPDYGQP). A phosphotyrosine mark is found at Tyr273 and Tyr289. Gly residues predominate over residues 277–296 (ASGGGGYGPQGDYGQQGYGQ).

It belongs to the synaptophysin/synaptobrevin family. In terms of assembly, homohexamer or homotetramer. Interacts with SRCIN1. Interacts with VAMP2; the interaction is inhibited by interaction of VAPM2 with SEPT8. Post-translationally, ubiquitinated; mediated by SIAH1 or SIAH2 and leading to its subsequent proteasomal degradation. Phosphorylated by SRC. As to expression, expressed in the brain with expression in the cerebrum and the cerebellum.

Its subcellular location is the cytoplasmic vesicle. The protein localises to the secretory vesicle. The protein resides in the synaptic vesicle membrane. It localises to the synapse. It is found in the synaptosome. In terms of biological role, possibly involved in structural functions as organizing other membrane components or in targeting the vesicles to the plasma membrane. Involved in the regulation of short-term and long-term synaptic plasticity. This chain is Synaptophysin (Syp), found in Rattus norvegicus (Rat).